We begin with the raw amino-acid sequence, 359 residues long: Adenosine deaminase (359 aa).

His-15 and His-17 together coordinate Zn(2+). Residues His-17, Asp-19, and Gly-184 each coordinate substrate. Zn(2+) is bound at residue His-213. Residue Glu-216 is the Proton donor of the active site. Asp-295 provides a ligand contact to Zn(2+). Residue Asp-296 participates in substrate binding.

It belongs to the metallo-dependent hydrolases superfamily. Adenosine and AMP deaminases family. Zn(2+) is required as a cofactor.

It is found in the cell membrane. The protein resides in the cell junction. It localises to the cytoplasmic vesicle lumen. Its subcellular location is the cytoplasm. The protein localises to the lysosome. It carries out the reaction adenosine + H2O + H(+) = inosine + NH4(+). The catalysed reaction is 2'-deoxyadenosine + H2O + H(+) = 2'-deoxyinosine + NH4(+). Catalyzes the hydrolytic deamination of adenosine and 2-deoxyadenosine. Plays an important role in purine metabolism and in adenosine homeostasis. Modulates signaling by extracellular adenosine, and so contributes indirectly to cellular signaling events. May act as a positive regulator of T-cell coactivation. The sequence is that of Adenosine deaminase (ada) from Danio rerio (Zebrafish).